Consider the following 353-residue polypeptide: Protein-glutamate methylesterase/protein-glutamine glutaminase (353 aa).

A Response regulatory domain is found at R6–E123. 4-aspartylphosphate is present on D57. The region spanning A159–R351 is the CheB-type methylesterase domain. Residues S171, H197, and D293 contribute to the active site.

This sequence belongs to the CheB family. Post-translationally, phosphorylated by CheA. Phosphorylation of the N-terminal regulatory domain activates the methylesterase activity.

The protein resides in the cytoplasm. The enzyme catalyses [protein]-L-glutamate 5-O-methyl ester + H2O = L-glutamyl-[protein] + methanol + H(+). It catalyses the reaction L-glutaminyl-[protein] + H2O = L-glutamyl-[protein] + NH4(+). Functionally, involved in chemotaxis. Part of a chemotaxis signal transduction system that modulates chemotaxis in response to various stimuli. Catalyzes the demethylation of specific methylglutamate residues introduced into the chemoreceptors (methyl-accepting chemotaxis proteins or MCP) by CheR. Also mediates the irreversible deamidation of specific glutamine residues to glutamic acid. This is Protein-glutamate methylesterase/protein-glutamine glutaminase from Syntrophotalea carbinolica (strain DSM 2380 / NBRC 103641 / GraBd1) (Pelobacter carbinolicus).